The chain runs to 37 residues: Cortex morphogenetic protein A (37 aa).

As to quaternary structure, can form a complex with SpoIVA and ClpX.

It is found in the forespore. In terms of biological role, ensures proper spore envelope assembly. Represses premature cortex assembly until coat assembly successfully initiates. Also participates in a quality-control pathway that selectively removes defective sporulating cells through regulated cell death. Acts as an adaptator that delivers SpoIVA to the ClpXP proteolytic machinery for degradation, specifically in cells that improperly assemble the spore envelope. The protein is Cortex morphogenetic protein A of Bacillus subtilis (strain 168).